A 188-amino-acid chain; its full sequence is 2-amino-4-hydroxy-6-hydroxymethyldihydropteridine pyrophosphokinase (188 aa).

This sequence belongs to the HPPK family.

It carries out the reaction 6-hydroxymethyl-7,8-dihydropterin + ATP = (7,8-dihydropterin-6-yl)methyl diphosphate + AMP + H(+). The protein operates within cofactor biosynthesis; tetrahydrofolate biosynthesis; 2-amino-4-hydroxy-6-hydroxymethyl-7,8-dihydropteridine diphosphate from 7,8-dihydroneopterin triphosphate: step 4/4. Its function is as follows. Catalyzes the transfer of pyrophosphate from adenosine triphosphate (ATP) to 6-hydroxymethyl-7,8-dihydropterin, an enzymatic step in folate biosynthesis pathway. The polypeptide is 2-amino-4-hydroxy-6-hydroxymethyldihydropteridine pyrophosphokinase (folK) (Mycobacterium tuberculosis (strain ATCC 25618 / H37Rv)).